The following is a 299-amino-acid chain: Fluorinase (299 aa).

S-adenosyl-L-methionine is bound by residues Asp-15, 20 to 22, Tyr-76, Ser-157, Asp-210, Asn-215, 269 to 270, and 277 to 279; these read DDS, SR, and RNA.

Belongs to the SAM hydrolase / SAM-dependent halogenase family.

The enzyme catalyses fluoride + S-adenosyl-L-methionine = 5'-deoxy-5'-fluoroadenosine + L-methionine. With respect to regulation, activity is not severely affected by most metal ions (Mg(2+), Mn(2+), Co(2+) and Fe(2+)), but both Cu(2+) and Zn(2+) are strong inhibitors. Catalyzes the formation of a C-F bond by combining S-adenosyl-L-methionine (SAM) and fluoride to generate 5'-fluoro-5'-deoxyadenosine (5'-FDA) and L-methionine. The sequence is that of Fluorinase from Actinopolyspora mzabensis.